The sequence spans 579 residues: Glucose starvation modulator protein 1 (579 aa).

The segment at residues 20–48 (CVFCHEKHLQCDLGRPCQNCSKRGIGDTC) is a DNA-binding region (zn(2)-C6 fungal-type). Basic and acidic residues predominate over residues 43–53 (GIGDTCRDKER). Disordered regions lie at residues 43 to 75 (GIGD…STKS) and 319 to 342 (QMAS…GETV). Basic residues predominate over residues 54–64 (KPRKRGPRKVK). Residues 330–339 (NDTSPESQGG) are compositionally biased toward polar residues. In terms of domain architecture, PAS spans 444–516 (LLEYESMAKL…DIFHEYLAFG (73 aa)).

The protein belongs to the ERT1/acuK family.

Its subcellular location is the nucleus. Transcription factor which regulates nonfermentable carbon utilization. In Kluyveromyces lactis (strain ATCC 8585 / CBS 2359 / DSM 70799 / NBRC 1267 / NRRL Y-1140 / WM37) (Yeast), this protein is Glucose starvation modulator protein 1 (GSM1).